Reading from the N-terminus, the 677-residue chain is WD and tetratricopeptide repeats protein 1 (677 aa).

WD repeat units follow at residues Gly45 to Ser84, Gly88 to Met129, Asp132 to Glu172, Gly182 to Lys222, and Arg265 to Thr305. Ser353 bears the Phosphoserine mark. TPR repeat units follow at residues Leu362–Asn395 and Met397–His432. Residues Asn487 to Lys509 are disordered. Residue Ser511 is modified to Phosphoserine. WD repeat units follow at residues Asn535–Val575 and Gly578–Thr617. Residues Ser655–Ser677 form a disordered region.

It participates in protein modification; protein ubiquitination. Functionally, may function as a substrate receptor for CUL4-DDB1 E3 ubiquitin-protein ligase complex. This is WD and tetratricopeptide repeats protein 1 (WDTC1) from Homo sapiens (Human).